A 511-amino-acid polypeptide reads, in one-letter code: Prolyl 3-hydroxylase OGFOD1 (511 aa).

The segment at 1–20 is disordered; that stretch reads MTGKRGTAAGTDGSGNKKGK. The region spanning 138–240 is the Fe2OG dioxygenase domain; it reads KTVDISCAQY…RLSVSGWFHG (103 aa). The Fe cation site is built by His-156 and Asp-158. Tyr-170 provides a ligand contact to 2-oxoglutarate. His-219 serves as a coordination point for Fe cation. 2-oxoglutarate is bound at residue Arg-231. The tract at residues 372–403 is disordered; that stretch reads NEESDEGEGPSEPNTVSQQGASSEDDKVPSCS.

Belongs to the TPA1 family. In terms of assembly, monomer. Fe(2+) serves as cofactor. L-ascorbate is required as a cofactor.

It is found in the cytoplasm. The protein localises to the nucleus. It carries out the reaction [ribosomal protein uS12]-L-proline + 2-oxoglutarate + O2 = [ribosomal protein uS12]-(3S)-3-hydroxy-L-proline + succinate + CO2. Functionally, prolyl 3-hydroxylase that catalyzes 3-hydroxylation of 'Pro-62' of small ribosomal subunit uS12 (rps23), thereby regulating protein translation termination efficiency. Involved in stress granule formation. This chain is Prolyl 3-hydroxylase OGFOD1 (ogfod1), found in Xenopus laevis (African clawed frog).